We begin with the raw amino-acid sequence, 794 residues long: Protein SEY1 (794 aa).

Residues 1–687 lie on the Cytoplasmic side of the membrane; the sequence is MMEVIDSVLG…KRSIIKTTTA (687 aa). Residues 43–272 form the GB1/RHD3-type G domain; it reads GLDYHVISVF…ANPYYFKPQY (230 aa). GTP is bound at residue 53 to 60; sequence GSQSSGKS. Positions 331 to 352 form a coiled coil; that stretch reads VDHILDDREKLGEVLKNLKQEC. Residues 688–708 form a helical membrane-spanning segment; the sequence is IPIWMYLLVVALGWNEFVMVL. Topologically, residues 709-711 are lumenal; it reads RNP. Residues 712 to 732 traverse the membrane as a helical segment; the sequence is LLVTLVLLFGVGFIFVNKFGL. Residues 733 to 794 are Cytoplasmic-facing; the sequence is WGPVLNVAHN…SDNEKIEKSE (62 aa). Residues 770-794 form a disordered region; it reads NSAGKESYEMKDMSDSDNEKIEKSE. The span at 775–794 shows a compositional bias: basic and acidic residues; the sequence is ESYEMKDMSDSDNEKIEKSE.

The protein belongs to the TRAFAC class dynamin-like GTPase superfamily. GB1/RHD3 GTPase family. RHD3 subfamily.

The protein resides in the endoplasmic reticulum membrane. Its function is as follows. Cooperates with the reticulon proteins and tubule-shaping DP1 family proteins to generate and maintain the structure of the tubular endoplasmic reticulum network. Has GTPase activity, which is required for its function in ER organization. The chain is Protein SEY1 from Zygosaccharomyces rouxii (strain ATCC 2623 / CBS 732 / NBRC 1130 / NCYC 568 / NRRL Y-229).